The primary structure comprises 800 residues: DNA topoisomerase 4 subunit A (800 aa).

Residues 31–495 (LPDVRDGLKP…EIEEIKIDKE (465 aa)) enclose the Topo IIA-type catalytic domain. Tyr119 (O-(5'-phospho-DNA)-tyrosine intermediate) is an active-site residue.

It belongs to the type II topoisomerase GyrA/ParC subunit family. ParC type 2 subfamily. In terms of assembly, heterotetramer composed of ParC and ParE.

The protein resides in the cell membrane. The catalysed reaction is ATP-dependent breakage, passage and rejoining of double-stranded DNA.. Functionally, topoisomerase IV is essential for chromosome segregation. It relaxes supercoiled DNA. Performs the decatenation events required during the replication of a circular DNA molecule. The polypeptide is DNA topoisomerase 4 subunit A (Staphylococcus aureus (strain Mu50 / ATCC 700699)).